Consider the following 808-residue polypeptide: Probable inorganic carbon transporter subunit DabA (808 aa).

Zn(2+) is bound by residues Cys-335, Asp-337, His-497, and Cys-512.

The protein belongs to the inorganic carbon transporter (TC 9.A.2) DabA family. As to quaternary structure, forms a complex with DabB. Zn(2+) is required as a cofactor.

The protein resides in the cell inner membrane. Its function is as follows. Part of an energy-coupled inorganic carbon pump. The protein is Probable inorganic carbon transporter subunit DabA of Rhodopseudomonas palustris (strain ATCC BAA-98 / CGA009).